A 456-amino-acid polypeptide reads, in one-letter code: Hydroxyproline dehydrogenase (456 aa).

N6-acetyllysine occurs at positions 310 and 320.

The protein belongs to the proline oxidase family. FAD serves as cofactor.

It carries out the reaction trans-4-hydroxy-L-proline + a quinone = (3R,5S)-1-pyrroline-3-hydroxy-5-carboxylate + a quinol + H(+). The catalysed reaction is L-proline + a quinone = (S)-1-pyrroline-5-carboxylate + a quinol + H(+). Functionally, dehydrogenase that converts trans-4-L-hydroxyproline to delta-1-pyrroline-3-hydroxy-5-carboxylate (Hyp) using ubiquinone-10 as the terminal electron acceptor. Can also use proline as a substrate but with a very much lower efficiency. Does not react with other diastereomers of Hyp: trans-4-D-hydroxyproline and cis-4-L-hydroxyproline. Ubiquininone analogs such as menadione, duroquinone and ubiquinone-1 react more efficiently than oxygen as the terminal electron acceptor during catalysis. The protein is Hydroxyproline dehydrogenase of Rattus norvegicus (Rat).